A 314-amino-acid chain; its full sequence is Formimidoylglutamase (314 aa).

Mn(2+) contacts are provided by His-127, Asp-153, His-155, Asp-157, Asp-245, and Asp-247.

This sequence belongs to the arginase family. Mn(2+) is required as a cofactor.

The catalysed reaction is N-formimidoyl-L-glutamate + H2O = formamide + L-glutamate. It functions in the pathway amino-acid degradation; L-histidine degradation into L-glutamate; L-glutamate from N-formimidoyl-L-glutamate (hydrolase route): step 1/1. Functionally, catalyzes the conversion of N-formimidoyl-L-glutamate to L-glutamate and formamide. The polypeptide is Formimidoylglutamase (Aeromonas salmonicida (strain A449)).